Consider the following 241-residue polypeptide: uncharacterized protein (241 aa).

The GGDEF domain maps to 84-216 (TVVSLVVCDL…APGPVVAGRD (133 aa)). The disordered stretch occupies residues 215-241 (RDGEVVRLADSPPKSAHDRRRLRGNRP). Residues 231–241 (HDRRRLRGNRP) are compositionally biased toward basic residues.

This is an uncharacterized protein from Streptomyces griseus.